The following is a 316-amino-acid chain: Pyridoxal 5'-phosphate synthase subunit PdxS (316 aa).

D44 is a binding site for D-ribose 5-phosphate. K101 functions as the Schiff-base intermediate with D-ribose 5-phosphate in the catalytic mechanism. G173 contacts D-ribose 5-phosphate. K185 serves as a coordination point for D-glyceraldehyde 3-phosphate. D-ribose 5-phosphate contacts are provided by residues G234 and 255-256 (GS).

This sequence belongs to the PdxS/SNZ family. As to quaternary structure, in the presence of PdxT, forms a dodecamer of heterodimers.

It catalyses the reaction aldehydo-D-ribose 5-phosphate + D-glyceraldehyde 3-phosphate + L-glutamine = pyridoxal 5'-phosphate + L-glutamate + phosphate + 3 H2O + H(+). The protein operates within cofactor biosynthesis; pyridoxal 5'-phosphate biosynthesis. Its function is as follows. Catalyzes the formation of pyridoxal 5'-phosphate from ribose 5-phosphate (RBP), glyceraldehyde 3-phosphate (G3P) and ammonia. The ammonia is provided by the PdxT subunit. Can also use ribulose 5-phosphate and dihydroxyacetone phosphate as substrates, resulting from enzyme-catalyzed isomerization of RBP and G3P, respectively. The polypeptide is Pyridoxal 5'-phosphate synthase subunit PdxS (Sulfurisphaera tokodaii (strain DSM 16993 / JCM 10545 / NBRC 100140 / 7) (Sulfolobus tokodaii)).